Reading from the N-terminus, the 1483-residue chain is Chromosome partition protein MukB (1483 aa).

34-41 (GGNGAGKS) contributes to the ATP binding site. Coiled coils occupy residues 311–426 (EMAR…LQRA) and 547–607 (GQQV…WLAA). The segment at 666–783 (PGGSEDARLN…KVPLFGRAAR (118 aa)) is flexible hinge. 2 coiled-coil regions span residues 835–1115 (EAAL…SAKA) and 1206–1266 (DDPV…QAVS). The interval 850–870 (RELNNHESENQQQRQQYEQAK) is disordered.

Belongs to the SMC family. MukB subfamily. In terms of assembly, homodimerization via its hinge domain. Binds to DNA via its C-terminal region. Interacts, and probably forms a ternary complex, with MukE and MukF via its C-terminal region. The complex formation is stimulated by calcium or magnesium. Interacts with tubulin-related protein FtsZ.

Its subcellular location is the cytoplasm. It is found in the nucleoid. Plays a central role in chromosome condensation, segregation and cell cycle progression. Functions as a homodimer, which is essential for chromosome partition. Involved in negative DNA supercoiling in vivo, and by this means organize and compact chromosomes. May achieve or facilitate chromosome segregation by condensation DNA from both sides of a centrally located replisome during cell division. In Erwinia tasmaniensis (strain DSM 17950 / CFBP 7177 / CIP 109463 / NCPPB 4357 / Et1/99), this protein is Chromosome partition protein MukB.